The chain runs to 128 residues: Arginine decarboxylase proenzyme (128 aa).

Ser-76 functions as the Schiff-base intermediate with substrate; via pyruvic acid in the catalytic mechanism. Ser-76 carries the pyruvic acid (Ser); by autocatalysis modification. Catalysis depends on His-81, which acts as the Proton acceptor; for processing activity. Cys-96 (proton donor; for catalytic activity) is an active-site residue.

This sequence belongs to the prokaryotic AdoMetDC family. Type 1 subfamily. As to quaternary structure, heterooctamer of four alpha and four beta chains arranged as a tetramer of alpha/beta heterodimers. Requires pyruvate as cofactor. Post-translationally, is synthesized initially as an inactive proenzyme. Formation of the active enzyme involves a self-maturation process in which the active site pyruvoyl group is generated from an internal serine residue via an autocatalytic post-translational modification. Two non-identical subunits are generated from the proenzyme in this reaction, and the pyruvate is formed at the N-terminus of the alpha chain, which is derived from the carboxyl end of the proenzyme. The post-translation cleavage follows an unusual pathway, termed non-hydrolytic serinolysis, in which the side chain hydroxyl group of the serine supplies its oxygen atom to form the C-terminus of the beta chain, while the remainder of the serine residue undergoes an oxidative deamination to produce ammonia and the pyruvoyl group blocking the N-terminus of the alpha chain.

The enzyme catalyses L-arginine + H(+) = agmatine + CO2. The protein operates within amine and polyamine biosynthesis; agmatine biosynthesis; agmatine from L-arginine: step 1/1. In terms of biological role, specifically catalyzes the decarboxylation of L-arginine to agmatine. Has no S-adenosylmethionine decarboxylase (AdoMetDC) activity. The polypeptide is Arginine decarboxylase proenzyme (Metallosphaera sedula (strain ATCC 51363 / DSM 5348 / JCM 9185 / NBRC 15509 / TH2)).